The primary structure comprises 253 residues: Large ribosomal subunit protein uL10m (253 aa).

The transit peptide at 1–24 (MANLMQRSLPLTTTRTPVLQFLRF) directs the protein to the mitochondrion.

This sequence belongs to the universal ribosomal protein uL10 family. Component of the mitochondrial ribosome large subunit (39S) which comprises a 16S rRNA and about 50 distinct proteins.

Its subcellular location is the mitochondrion. This chain is Large ribosomal subunit protein uL10m (mRpL10), found in Drosophila pseudoobscura pseudoobscura (Fruit fly).